Here is a 187-residue protein sequence, read N- to C-terminus: Insulin-like growth factor 2 (187 aa).

An N-terminal signal peptide occupies residues 1-23 (MCAARQILLLLLAFLAYALDSAA). The segment at 25-51 (YGTAETLCGGELVDTLQFVCGDRGFYF) is b. 3 cysteine pairs are disulfide-bonded: C32–C71, C44–C84, and C70–C75. The tract at residues 52–64 (SRPVGRNNRRINR) is c. Residues 64-85 (RGIVEECCFRSCDLALLETYCA) form an a region. A d region spans residues 86–91 (KSVKSE). Residues 92–187 (RDLSATSLAG…ASPEATGPQE (96 aa)) constitute a propeptide, e peptide. The tract at residues 162–187 (HRPLISLPSQRPPAPRASPEATGPQE) is disordered.

Belongs to the insulin family.

Its subcellular location is the secreted. Its function is as follows. The insulin-like growth factors, isolated from plasma, are structurally and functionally related to insulin but have a much higher growth-promoting activity. Acts as a ligand for integrin which is required for IGF2 signaling. This Gallus gallus (Chicken) protein is Insulin-like growth factor 2.